Reading from the N-terminus, the 249-residue chain is NAD(P)H-hydrate epimerase (249 aa).

In terms of domain architecture, YjeF N-terminal spans 11-233 (AQQIDVELMS…ELGKKHELNI (223 aa)). 62-66 (NQGGD) contributes to the (6S)-NADPHX binding site. Glutamine 63 and aspartate 127 together coordinate K(+). Residues 131–137 (GFSFQPP) and aspartate 162 each bind (6S)-NADPHX. K(+) is bound at residue serine 165.

This sequence belongs to the NnrE/AIBP family. It depends on K(+) as a cofactor.

It localises to the cytoplasm. Its subcellular location is the mitochondrion. It carries out the reaction (6R)-NADHX = (6S)-NADHX. It catalyses the reaction (6R)-NADPHX = (6S)-NADPHX. Its function is as follows. Catalyzes the epimerization of the S- and R-forms of NAD(P)HX, a damaged form of NAD(P)H that is a result of enzymatic or heat-dependent hydration. This is a prerequisite for the S-specific NAD(P)H-hydrate dehydratase to allow the repair of both epimers of NAD(P)HX. The protein is NAD(P)H-hydrate epimerase of Cryptococcus neoformans var. neoformans serotype D (strain JEC21 / ATCC MYA-565) (Filobasidiella neoformans).